The sequence spans 456 residues: Glutamyl-tRNA(Gln) amidotransferase subunit A (456 aa).

Active-site charge relay system residues include lysine 74 and serine 149. Serine 173 (acyl-ester intermediate) is an active-site residue.

This sequence belongs to the amidase family. GatA subfamily. In terms of assembly, heterotrimer of A, B and C subunits.

It catalyses the reaction L-glutamyl-tRNA(Gln) + L-glutamine + ATP + H2O = L-glutaminyl-tRNA(Gln) + L-glutamate + ADP + phosphate + H(+). Functionally, allows the formation of correctly charged Gln-tRNA(Gln) through the transamidation of misacylated Glu-tRNA(Gln) in organisms which lack glutaminyl-tRNA synthetase. The reaction takes place in the presence of glutamine and ATP through an activated gamma-phospho-Glu-tRNA(Gln). This is Glutamyl-tRNA(Gln) amidotransferase subunit A from Methanobrevibacter smithii (strain ATCC 35061 / DSM 861 / OCM 144 / PS).